The chain runs to 132 residues: Small ribosomal subunit protein uS11 (132 aa).

The protein belongs to the universal ribosomal protein uS11 family. Part of the 30S ribosomal subunit. Interacts with proteins S7 and S18. Binds to IF-3.

In terms of biological role, located on the platform of the 30S subunit, it bridges several disparate RNA helices of the 16S rRNA. Forms part of the Shine-Dalgarno cleft in the 70S ribosome. The chain is Small ribosomal subunit protein uS11 from Chlamydia trachomatis serovar A (strain ATCC VR-571B / DSM 19440 / HAR-13).